Consider the following 354-residue polypeptide: Ferrochelatase (354 aa).

Residues histidine 191 and glutamate 271 each coordinate Fe cation.

It belongs to the ferrochelatase family.

It is found in the cytoplasm. It catalyses the reaction heme b + 2 H(+) = protoporphyrin IX + Fe(2+). Its pathway is porphyrin-containing compound metabolism; protoheme biosynthesis; protoheme from protoporphyrin-IX: step 1/1. Catalyzes the ferrous insertion into protoporphyrin IX. The polypeptide is Ferrochelatase (Rickettsia bellii (strain OSU 85-389)).